The chain runs to 270 residues: 5-deoxy-glucuronate isomerase (270 aa).

It belongs to the isomerase IolB family.

The enzyme catalyses 5-deoxy-D-glucuronate = 5-dehydro-2-deoxy-D-gluconate. The protein operates within polyol metabolism; myo-inositol degradation into acetyl-CoA; acetyl-CoA from myo-inositol: step 4/7. In terms of biological role, involved in the isomerization of 5-deoxy-glucuronate (5DG) to 5-dehydro-2-deoxy-D-gluconate (DKG or 2-deoxy-5-keto-D-gluconate). This is 5-deoxy-glucuronate isomerase from Halalkalibacterium halodurans (strain ATCC BAA-125 / DSM 18197 / FERM 7344 / JCM 9153 / C-125) (Bacillus halodurans).